A 506-amino-acid chain; its full sequence is Cationic amino acid transporter 8 (506 aa).

N-linked (GlcNAc...) asparagine glycosylation is found at asparagine 2 and asparagine 5. The helical transmembrane segment at 38 to 58 threads the bilayer; the sequence is FYLLLIIIIYTATSACIYFDW. A glycan (N-linked (GlcNAc...) asparagine) is linked at asparagine 75. Helical transmembrane passes span 93-113, 116-136, 147-167, 174-194, and 211-231; these read NLYP…GFLY, IGPK…WIFL, LIGF…ILTV, ISTF…AVPA, and ICYG…TFLL. An N-linked (GlcNAc...) asparagine glycan is attached at asparagine 277. Residues 302–322 form a helical membrane-spanning segment; sequence ILLFFKVLLSYPSICIIVYFI. N-linked (GlcNAc...) asparagine glycans are attached at residues asparagine 325 and asparagine 342. 4 consecutive transmembrane segments (helical) span residues 344-364, 372-392, 399-419, and 427-447; these read SIIN…IIFG, AAII…TALI, LISA…IYCF, and VVFG…SLFC. Residues asparagine 453 and asparagine 456 are each glycosylated (N-linked (GlcNAc...) asparagine). Residues 466 to 486 form a helical membrane-spanning segment; that stretch reads TISILLAISFIIMFLPLSILY.

This sequence belongs to the SLC43A transporter (TC 2.A.1.44) family.

The protein localises to the cell membrane. Functionally, cationic amino acid transporter which transports L-arginine, L-lysine and, to a lesser extent, L-histidine and ornithine. Plays an essential role in gametogenesis. The sequence is that of Cationic amino acid transporter 8 from Plasmodium berghei (strain Anka).